The following is a 227-amino-acid chain: Cytochrome c oxidase subunit 2 (227 aa).

Topologically, residues 1–14 (MAHATQVGLQDATS) are mitochondrial intermembrane. Residues 15 to 45 (PIMEELISFHDHALMIIFLISFLVLYALFLT) traverse the membrane as a helical segment. The Mitochondrial matrix portion of the chain corresponds to 46-59 (LTTKLTNTNITDAQ). Residues 60-87 (EMETVWTILPAIILVLIALPSLRILYLT) traverse the membrane as a helical segment. Over 88–227 (DEINDPSFTI…IFEMGPVFTL (140 aa)) the chain is Mitochondrial intermembrane. 6 residues coordinate Cu cation: histidine 161, cysteine 196, glutamate 198, cysteine 200, histidine 204, and methionine 207. Glutamate 198 is a binding site for Mg(2+).

This sequence belongs to the cytochrome c oxidase subunit 2 family. Component of the cytochrome c oxidase (complex IV, CIV), a multisubunit enzyme composed of 14 subunits. The complex is composed of a catalytic core of 3 subunits MT-CO1, MT-CO2 and MT-CO3, encoded in the mitochondrial DNA, and 11 supernumerary subunits COX4I, COX5A, COX5B, COX6A, COX6B, COX6C, COX7A, COX7B, COX7C, COX8 and NDUFA4, which are encoded in the nuclear genome. The complex exists as a monomer or a dimer and forms supercomplexes (SCs) in the inner mitochondrial membrane with NADH-ubiquinone oxidoreductase (complex I, CI) and ubiquinol-cytochrome c oxidoreductase (cytochrome b-c1 complex, complex III, CIII), resulting in different assemblies (supercomplex SCI(1)III(2)IV(1) and megacomplex MCI(2)III(2)IV(2)). Found in a complex with TMEM177, COA6, COX18, COX20, SCO1 and SCO2. Interacts with TMEM177 in a COX20-dependent manner. Interacts with COX20. Interacts with COX16. It depends on Cu cation as a cofactor.

The protein localises to the mitochondrion inner membrane. It carries out the reaction 4 Fe(II)-[cytochrome c] + O2 + 8 H(+)(in) = 4 Fe(III)-[cytochrome c] + 2 H2O + 4 H(+)(out). Component of the cytochrome c oxidase, the last enzyme in the mitochondrial electron transport chain which drives oxidative phosphorylation. The respiratory chain contains 3 multisubunit complexes succinate dehydrogenase (complex II, CII), ubiquinol-cytochrome c oxidoreductase (cytochrome b-c1 complex, complex III, CIII) and cytochrome c oxidase (complex IV, CIV), that cooperate to transfer electrons derived from NADH and succinate to molecular oxygen, creating an electrochemical gradient over the inner membrane that drives transmembrane transport and the ATP synthase. Cytochrome c oxidase is the component of the respiratory chain that catalyzes the reduction of oxygen to water. Electrons originating from reduced cytochrome c in the intermembrane space (IMS) are transferred via the dinuclear copper A center (CU(A)) of subunit 2 and heme A of subunit 1 to the active site in subunit 1, a binuclear center (BNC) formed by heme A3 and copper B (CU(B)). The BNC reduces molecular oxygen to 2 water molecules using 4 electrons from cytochrome c in the IMS and 4 protons from the mitochondrial matrix. This Hylobates lar (Lar gibbon) protein is Cytochrome c oxidase subunit 2 (MT-CO2).